Here is a 92-residue protein sequence, read N- to C-terminus: Putative regulatory protein CA_C1717 (92 aa).

Belongs to the RemA family.

This chain is Putative regulatory protein CA_C1717, found in Clostridium acetobutylicum (strain ATCC 824 / DSM 792 / JCM 1419 / IAM 19013 / LMG 5710 / NBRC 13948 / NRRL B-527 / VKM B-1787 / 2291 / W).